A 259-amino-acid chain; its full sequence is Flap endonuclease Xni (259 aa).

Asp109 contributes to the Mg(2+) binding site. Residues 165–255 (VTPAQLTDYW…FNLQDIRFNS (91 aa)) enclose the 5'-3' exonuclease domain. Residues Leu176, Pro185, Val187, and Ile190 each coordinate K(+). Residues 189 to 194 (GIGPKA) are interaction with DNA.

The protein belongs to the Xni family. Mg(2+) serves as cofactor. The cofactor is K(+).

In terms of biological role, has flap endonuclease activity. During DNA replication, flap endonucleases cleave the 5'-overhanging flap structure that is generated by displacement synthesis when DNA polymerase encounters the 5'-end of a downstream Okazaki fragment. In Vibrio cholerae serotype O1 (strain ATCC 39315 / El Tor Inaba N16961), this protein is Flap endonuclease Xni.